The chain runs to 320 residues: Probable cell division protein WhiA (320 aa).

The segment at residues Thr276–Ala310 is a DNA-binding region (H-T-H motif).

This sequence belongs to the WhiA family.

Its function is as follows. Involved in cell division and chromosome segregation. In Geobacillus sp. (strain WCH70), this protein is Probable cell division protein WhiA.